Reading from the N-terminus, the 242-residue chain is Probable ABC transporter ATP-binding protein PEB1C (242 aa).

Residues Ile2 to Leu236 enclose the ABC transporter domain. Position 34–41 (Gly34–Ser41) interacts with ATP.

This sequence belongs to the ABC transporter superfamily.

Its subcellular location is the cell inner membrane. In terms of biological role, most probably involved, with PEB1, in a binding-protein-dependent transport system for an amino acid. Probably responsible for energy coupling to the transport system. The chain is Probable ABC transporter ATP-binding protein PEB1C (peb1C) from Campylobacter jejuni subsp. jejuni serotype O:23/36 (strain 81-176).